The sequence spans 370 residues: S-adenosylmethionine decarboxylase proenzyme (370 aa).

Phe-28 is a binding site for substrate. Residues Glu-29 and Glu-32 contribute to the active site. Residue Glu-85 coordinates substrate. Ser-86 functions as the Schiff-base intermediate with substrate; via pyruvic acid in the catalytic mechanism. Position 86 is a pyruvic acid (Ser); by autocatalysis (Ser-86). Cys-100 (proton donor; for catalytic activity) is an active-site residue. Active-site proton acceptor; for processing activity residues include Ser-250 and His-263. Glu-267 lines the substrate pocket.

It belongs to the eukaryotic AdoMetDC family. In terms of assembly, forms a heterodimer with catalytically inactive AdoMetDC prozyme; heterodimerization is required to activate AdoMetDC. It depends on pyruvate as a cofactor. Post-translationally, is synthesized initially as an inactive proenzyme. Formation of the active enzyme involves a self-maturation process in which the active site pyruvoyl group is generated from an internal serine residue via an autocatalytic post-translational modification. Two non-identical subunits are generated from the proenzyme in this reaction, and the pyruvate is formed at the N-terminus of the alpha chain, which is derived from the carboxyl end of the proenzyme. The post-translation cleavage follows an unusual pathway, termed non-hydrolytic serinolysis, in which the side chain hydroxyl group of the serine supplies its oxygen atom to form the C-terminus of the beta chain, while the remainder of the serine residue undergoes an oxidative deamination to the alpha chain.

It carries out the reaction S-adenosyl-L-methionine + H(+) = S-adenosyl 3-(methylsulfanyl)propylamine + CO2. Its pathway is amine and polyamine biosynthesis; S-adenosylmethioninamine biosynthesis; S-adenosylmethioninamine from S-adenosyl-L-methionine: step 1/1. Allosterically activated by AdoMetDC prozyme. Activated by putrescine. Inhibited by spermine and methylglyoxal-bis(guanylhydrazone) (MGBG) and slightly by spermidine. Inhibited by 5'-([(Z)-4-amino-2-butenyl]methylamino)-5'-deoxyadenosine (MDL 73811). Probably in association with catalytically inactive AdoMetDC prozyme, catalyzes the decarboxylation of S-adenosyl-L-methionine which is essential for the biosynthesis of the polyamine spermidine. Required for growth and survival during the bloodstream life cycle stage. This chain is S-adenosylmethionine decarboxylase proenzyme, found in Trypanosoma cruzi.